A 692-amino-acid polypeptide reads, in one-letter code: Elongation factor G 2 (692 aa).

Positions 8-283 constitute a tr-type G domain; the sequence is EKTRNIGIMA…SVVAYLPSPL (276 aa). Residues 17–24, 81–85, and 135–138 each bind GTP; these read AHIDAGKT, DTPGH, and NKMD.

It belongs to the TRAFAC class translation factor GTPase superfamily. Classic translation factor GTPase family. EF-G/EF-2 subfamily.

It is found in the cytoplasm. Functionally, catalyzes the GTP-dependent ribosomal translocation step during translation elongation. During this step, the ribosome changes from the pre-translocational (PRE) to the post-translocational (POST) state as the newly formed A-site-bound peptidyl-tRNA and P-site-bound deacylated tRNA move to the P and E sites, respectively. Catalyzes the coordinated movement of the two tRNA molecules, the mRNA and conformational changes in the ribosome. This chain is Elongation factor G 2, found in Geobacter sulfurreducens (strain ATCC 51573 / DSM 12127 / PCA).